Here is a 302-residue protein sequence, read N- to C-terminus: Large ribosomal subunit protein uL4m (302 aa).

This sequence belongs to the universal ribosomal protein uL4 family. As to quaternary structure, component of the mitochondrial ribosome large subunit (39S) which comprises a 16S rRNA and about 50 distinct proteins.

Its subcellular location is the mitochondrion. The polypeptide is Large ribosomal subunit protein uL4m (mrpl4) (Danio rerio (Zebrafish)).